Here is a 258-residue protein sequence, read N- to C-terminus: UPF0246 protein CJA_0191 (258 aa).

Belongs to the UPF0246 family.

This is UPF0246 protein CJA_0191 from Cellvibrio japonicus (strain Ueda107) (Pseudomonas fluorescens subsp. cellulosa).